The sequence spans 273 residues: Proteasome subunit beta type-10 (273 aa).

Met1 is subject to N-acetylmethionine. A propeptide spans 1–39 (removed in mature form); the sequence is MLKQAVEHRGGFSFENCQRNASLEHVLPGLRVPLARKTG. The active-site Nucleophile is Thr40. A Phosphoserine modification is found at Ser230.

The protein belongs to the peptidase T1B family. The 26S proteasome consists of a 20S proteasome core and two 19S regulatory subunits. The 20S proteasome core is composed of 28 subunits that are arranged in four stacked rings, resulting in a barrel-shaped structure. The two end rings are each formed by seven alpha subunits, and the two central rings are each formed by seven beta subunits. The catalytic chamber with the active sites is on the inside of the barrel. Component of the immunoproteasome, where it displaces the equivalent housekeeping subunit PSMB7. Component of the spermatoproteasome, a form of the proteasome specifically found in testis. Autocleaved. The resulting N-terminal Thr residue of the mature subunit is responsible for the nucleophile proteolytic activity.

The protein localises to the cytoplasm. It localises to the nucleus. It carries out the reaction Cleavage of peptide bonds with very broad specificity.. Functionally, the proteasome is a multicatalytic proteinase complex which is characterized by its ability to cleave peptides with Arg, Phe, Tyr, Leu, and Glu adjacent to the leaving group at neutral or slightly basic pH. The proteasome has an ATP-dependent proteolytic activity. This subunit is involved in antigen processing to generate class I binding peptides. This Rattus norvegicus (Rat) protein is Proteasome subunit beta type-10 (Psmb10).